A 167-amino-acid chain; its full sequence is Transmembrane protein 220 (167 aa).

5 helical membrane passes run Pro-10 to Val-30, Trp-40 to Val-60, Val-69 to Leu-89, Glu-104 to Ser-122, and Met-130 to His-150.

Its subcellular location is the membrane. This Mus musculus (Mouse) protein is Transmembrane protein 220 (Tmem220).